Reading from the N-terminus, the 316-residue chain is Very long chain fatty acid elongase 6 (316 aa).

A glycan (N-linked (GlcNAc...) asparagine) is linked at Asn-11. Transmembrane regions (helical) follow at residues 30-50, 64-84, 117-137, 142-162, 167-189, and 202-222; these read WMLE…LVIF, LRGP…MGAA, FWTW…IFIV, PLIF…WFSY, SSAR…YYAL, and MIIT…NVWA. An N-linked (GlcNAc...) asparagine glycan is attached at Asn-242. Residues 245–265 form a helical membrane-spanning segment; the sequence is IAMYSSYFVLFARFFYKAYLA.

Belongs to the ELO family. ELOVL6 subfamily. In terms of tissue distribution, detected in the CNS (central nervous system) of third larval instar (at protein level). Expressed in cyst progenitor cells (at protein level). In the adult fly, expressed in several tissues including, sperm, follicular epithelium, nurse cells and cyst cells.

It localises to the mitochondrion outer membrane. The protein localises to the endoplasmic reticulum membrane. It carries out the reaction a very-long-chain acyl-CoA + malonyl-CoA + H(+) = a very-long-chain 3-oxoacyl-CoA + CO2 + CoA. The catalysed reaction is hexadecanoyl-CoA + malonyl-CoA + H(+) = 3-oxooctadecanoyl-CoA + CO2 + CoA. It functions in the pathway lipid metabolism; fatty acid biosynthesis. Catalyzes the first and rate-limiting reaction of the four reactions that constitute the long-chain fatty acids elongation cycle. This process allows the addition of 2 carbons to the chain of long- and very long-chain fatty acids (VLCFAs) per cycle. Condensing enzyme that elongates fatty acids with 12, 14 and 16 carbons with higher activity toward C16:0 acyl-CoAs. Catalyzes the synthesis of unsaturated C16 long chain fatty acids and, to a lesser extent, C18:0 and those with low desaturation degree. May participate in the production of saturated and monounsaturated VLCFAs of different chain lengths that are involved in multiple biological processes as precursors of membrane lipids and lipid mediators. The polypeptide is Very long chain fatty acid elongase 6 (Drosophila melanogaster (Fruit fly)).